The following is a 537-amino-acid chain: CTP synthase (537 aa).

An amidoligase domain region spans residues 1–267 (MAKYIFVTGG…DEYVIKRLNL (267 aa)). Ser-13 contributes to the CTP binding site. Ser-13 contacts UTP. 14–19 (SLGKGI) contributes to the ATP binding site. Tyr-54 provides a ligand contact to L-glutamine. Position 71 (Asp-71) interacts with ATP. Positions 71 and 141 each coordinate Mg(2+). CTP-binding positions include 148 to 150 (DIE), 188 to 193 (KTKPTQ), and Lys-224. Residues 188–193 (KTKPTQ) and Lys-224 each bind UTP. 240-242 (RDV) provides a ligand contact to ATP. The region spanning 292–534 (EVALVGKYVD…VKAMLNLKIN (243 aa)) is the Glutamine amidotransferase type-1 domain. Gly-354 contacts L-glutamine. The Nucleophile; for glutamine hydrolysis role is filled by Cys-381. L-glutamine-binding positions include 382 to 385 (LGMQ), Glu-405, and Arg-462. Catalysis depends on residues His-507 and Glu-509.

It belongs to the CTP synthase family. As to quaternary structure, homotetramer.

The enzyme catalyses UTP + L-glutamine + ATP + H2O = CTP + L-glutamate + ADP + phosphate + 2 H(+). It catalyses the reaction L-glutamine + H2O = L-glutamate + NH4(+). The catalysed reaction is UTP + NH4(+) + ATP = CTP + ADP + phosphate + 2 H(+). Its pathway is pyrimidine metabolism; CTP biosynthesis via de novo pathway; CTP from UDP: step 2/2. With respect to regulation, allosterically activated by GTP, when glutamine is the substrate; GTP has no effect on the reaction when ammonia is the substrate. The allosteric effector GTP functions by stabilizing the protein conformation that binds the tetrahedral intermediate(s) formed during glutamine hydrolysis. Inhibited by the product CTP, via allosteric rather than competitive inhibition. In terms of biological role, catalyzes the ATP-dependent amination of UTP to CTP with either L-glutamine or ammonia as the source of nitrogen. Regulates intracellular CTP levels through interactions with the four ribonucleotide triphosphates. This Caldanaerobacter subterraneus subsp. tengcongensis (strain DSM 15242 / JCM 11007 / NBRC 100824 / MB4) (Thermoanaerobacter tengcongensis) protein is CTP synthase.